The following is a 201-amino-acid chain: Large ribosomal subunit protein eL15A (201 aa).

The tract at residues S161 to N182 is disordered. The segment covering K169–R179 has biased composition (basic residues).

Belongs to the eukaryotic ribosomal protein eL15 family. As to quaternary structure, component of the large ribosomal subunit (LSU). Mature yeast ribosomes consist of a small (40S) and a large (60S) subunit. The 40S small subunit contains 1 molecule of ribosomal RNA (18S rRNA) and at least 33 different proteins. The large 60S subunit contains 3 rRNA molecules (25S, 5.8S and 5S rRNA) and at least 46 different proteins.

Its subcellular location is the cytoplasm. The protein resides in the nucleus. The protein localises to the nucleolus. In terms of biological role, component of the ribosome, a large ribonucleoprotein complex responsible for the synthesis of proteins in the cell. The small ribosomal subunit (SSU) binds messenger RNAs (mRNAs) and translates the encoded message by selecting cognate aminoacyl-transfer RNA (tRNA) molecules. The large subunit (LSU) contains the ribosomal catalytic site termed the peptidyl transferase center (PTC), which catalyzes the formation of peptide bonds, thereby polymerizing the amino acids delivered by tRNAs into a polypeptide chain. The nascent polypeptides leave the ribosome through a tunnel in the LSU and interact with protein factors that function in enzymatic processing, targeting, and the membrane insertion of nascent chains at the exit of the ribosomal tunnel. This is Large ribosomal subunit protein eL15A (rpl15) from Schizosaccharomyces pombe (strain 972 / ATCC 24843) (Fission yeast).